We begin with the raw amino-acid sequence, 296 residues long: (+)-neomenthol dehydrogenase (296 aa).

16-40 is a binding site for NADP(+); it reads RGIGFEICRQLASEGIRVVLTSRDE. Residue S164 participates in substrate binding. Residue Y220 is the Proton acceptor of the active site.

The protein belongs to the short-chain dehydrogenases/reductases (SDR) family. In terms of assembly, monomer.

It is found in the cytoplasm. It carries out the reaction (+)-neomenthol + NADP(+) = (1R,4S)-menthone + NADPH + H(+). Functionally, aldehyde reductase that catalyzes the reduction of the aldehyde carbonyl groups on saturated and alpha,beta-unsaturated aldehydes with more than 5 carbons. Involved in basal resistance against pathogens. The chain is (+)-neomenthol dehydrogenase (SDR1) from Arabidopsis thaliana (Mouse-ear cress).